Here is a 203-residue protein sequence, read N- to C-terminus: ADP-ribosylation factor-like protein 6-interacting protein 1 (203 aa).

Topologically, residues 1–41 (MAEGDNRSSNLLAAETASLEEQLQGWGEVMLMADKVLRWER) are cytoplasmic. Residues 42–62 (AWFPPAIMGVVSLVFLIIYYL) form a helical membrane-spanning segment. Over 63–65 (DPS) the chain is Lumenal. The chain crosses the membrane as a helical span at residues 66-86 (VLSGVSCFVMFLCLADYLVPI). Over 87-133 (LAPRIFGSNKWTTEQQQRFHEICSNLVKTRRRAVGWWKRLFTLKEEK) the chain is Cytoplasmic. A helical membrane pass occupies residues 134 to 175 (PKMYFMTMIVSLAAVAWVGQQVHNLLLTYLIVTSLLLLPGLN). Residues 176–203 (QHGIISKYIGMAKREINKLLKQKEKKNE) lie on the Lumenal side of the membrane.

Belongs to the ARL6ip family. In terms of assembly, homooligomer. Heterodimer with ARL6IP5. Interacts with ATL1, TMEM33 and ARL6.

Its subcellular location is the endomembrane system. It localises to the endoplasmic reticulum membrane. It is found in the endoplasmic reticulum. Its function is as follows. Positively regulates SLC1A1/EAAC1-mediated glutamate transport by increasing its affinity for glutamate in a PKC activity-dependent manner. Promotes the catalytic efficiency of SLC1A1/EAAC1 probably by reducing its interaction with ARL6IP5, a negative regulator of SLC1A1/EAAC1-mediated glutamate transport. Plays a role in the formation and stabilization of endoplasmic reticulum tubules. Negatively regulates apoptosis, possibly by modulating the activity of caspase-9 (CASP9). Inhibits cleavage of CASP9-dependent substrates and downstream markers of apoptosis but not CASP9 itself. May be involved in protein transport, membrane trafficking, or cell signaling during hematopoietic maturation. This is ADP-ribosylation factor-like protein 6-interacting protein 1 (ARL6IP1) from Pongo abelii (Sumatran orangutan).